A 249-amino-acid polypeptide reads, in one-letter code: DDPYNPYKYSDDNPYYNYYXXXERPRPGSRYRPGYGTGYFQYGLPDLVPDPYYIQASTYVQKMSMYNLRCAAEENCLASTAYRADVRDYDHRVLLRFPQRVKNQGTSDFLPSRPRYSWEWHSCHQHYHSMDEFSHYDLLDASTQRRVAEGHKASFCLEDTSCDYGYHRRFACTAHTQGLSPGCYDTYNADIDCQWIDITDVKPGNYILKVSVNPSYLVPESDYSNNVVRCEIRYTGHHAYASGCTISPY.

Position 19 is a sulfotyrosine (Tyr-19). Positions 45–249 are lysyl-oxidase like; the sequence is PDLVPDPYYI…YASGCTISPY (205 aa). 5 disulfides stabilise this stretch: Cys-70-Cys-76, Cys-123-Cys-172, Cys-156-Cys-162, Cys-183-Cys-193, and Cys-230-Cys-244. Cu cation contacts are provided by His-124, His-126, and His-128. A cross-link (lysine tyrosylquinone (Lys-Tyr)) is located at residues 152–187; sequence KASFCLEDTSCDYGYHRRFACTAHTQGLSPGCYDTY. Tyr-187 carries the post-translational modification 2',4',5'-topaquinone.

Belongs to the lysyl oxidase family. As to quaternary structure, interacts with MFAP4. Interacts (via propeptide) with EFEMP2; this interaction is strong and facilitates formation of ternary complexes with ELN during elastic fiber assembly; this interaction limits interaction of EFEMP2 with FBLN5. Requires Cu cation as cofactor. Lysine tyrosylquinone residue is required as a cofactor. In terms of processing, the lysine tyrosylquinone cross-link (LTQ) is generated by condensation of the epsilon-amino group of a lysine with a topaquinone produced by oxidation of tyrosine. Proteolytically cleaved by BMP1 which removes the propeptide. Also proteolytically cleaved by ADAMTS2 and ADAMTS14, but not by ADAMTS3, at an additional cleavage site downstream of the BMP1 cleavage site. The propeptide plays a role in directing the deposition of this enzyme to elastic fibers, via interaction with tropoelastin. Cleavage by BMP1 to remove the propeptide does not increase enzymatic activity but increases binding to collagen. Cleavage by ADAMTS2 produces a form with reduced collagen-binding activity. Post-translationally, sulfated at Tyr-19 and also at either Tyr-15 or Tyr-16 which enhances binding to collagen.

The protein localises to the secreted. It is found in the extracellular space. The enzyme catalyses L-lysyl-[protein] + O2 + H2O = (S)-2-amino-6-oxohexanoyl-[protein] + H2O2 + NH4(+). Responsible for the post-translational oxidative deamination of peptidyl lysine residues in precursors to fibrous collagen and elastin. Regulator of Ras expression. May play a role in tumor suppression. Plays a role in the aortic wall architecture. This Sus scrofa (Pig) protein is Protein-lysine 6-oxidase.